A 323-amino-acid chain; its full sequence is Malate dehydrogenase (323 aa).

Position 11–17 (11–17) interacts with NAD(+); the sequence is GAAGQIA. The substrate site is built by R92 and R98. NAD(+) contacts are provided by residues N105, Q112, and 129–131; that span reads VGN. Substrate contacts are provided by N131 and R162. H187 functions as the Proton acceptor in the catalytic mechanism.

The protein belongs to the LDH/MDH superfamily. MDH type 2 family.

The catalysed reaction is (S)-malate + NAD(+) = oxaloacetate + NADH + H(+). Catalyzes the reversible oxidation of malate to oxaloacetate. This is Malate dehydrogenase from Corynebacterium efficiens (strain DSM 44549 / YS-314 / AJ 12310 / JCM 11189 / NBRC 100395).